Reading from the N-terminus, the 460-residue chain is Ribosomal protein uS12 methylthiotransferase RimO (460 aa).

In terms of domain architecture, MTTase N-terminal spans 16-130 (NKIHFISLGC…ILSAIESKES (115 aa)). [4Fe-4S] cluster-binding residues include Cys25, Cys61, Cys93, Cys164, Cys168, and Cys171. Residues 150–382 (STPKHYAYLK…SQTQKKNVEK (233 aa)) enclose the Radical SAM core domain. Positions 385–455 (KQFVGKIVEA…GYDLVGRVVN (71 aa)) constitute a TRAM domain.

It belongs to the methylthiotransferase family. RimO subfamily. It depends on [4Fe-4S] cluster as a cofactor.

The protein resides in the cytoplasm. It carries out the reaction L-aspartate(89)-[ribosomal protein uS12]-hydrogen + (sulfur carrier)-SH + AH2 + 2 S-adenosyl-L-methionine = 3-methylsulfanyl-L-aspartate(89)-[ribosomal protein uS12]-hydrogen + (sulfur carrier)-H + 5'-deoxyadenosine + L-methionine + A + S-adenosyl-L-homocysteine + 2 H(+). In terms of biological role, catalyzes the methylthiolation of an aspartic acid residue of ribosomal protein uS12. The protein is Ribosomal protein uS12 methylthiotransferase RimO of Chlamydia abortus (strain DSM 27085 / S26/3) (Chlamydophila abortus).